A 466-amino-acid chain; its full sequence is Na(+)/H(+) antiporter NhaA (466 aa).

The next 11 membrane-spanning stretches (helical) occupy residues 32-52 (VGGVLLLLAAITALIWANVPA), 74-94 (LSVQHWAADGLLAVFFFVAGI), 111-131 (AALPVAAALCGMAVPALVYTL), 142-162 (GWAVPTATDIAFALAVLAVIG), 172-192 (FLLTLAVVDDLFAILIIAVFF), 195-215 (DLNFAALAGAVIGLAVFWLLL), 221-241 (GWYVYVPLALVIWGLMYNSGI), 280-300 (GLAVPLFALFSAGVVISGGAL), 310-330 (LGVVLGLVVGKAIGIFGGTWL), 348-368 (VFAVASLAGIGFTVSLLIGEL), and 379-399 (EVKAAVLTGSLLAALIATTLL).

This sequence belongs to the NhaA Na(+)/H(+) (TC 2.A.33) antiporter family.

Its subcellular location is the cell membrane. The catalysed reaction is Na(+)(in) + 2 H(+)(out) = Na(+)(out) + 2 H(+)(in). In terms of biological role, na(+)/H(+) antiporter that extrudes sodium in exchange for external protons. This is Na(+)/H(+) antiporter NhaA from Streptomyces avermitilis (strain ATCC 31267 / DSM 46492 / JCM 5070 / NBRC 14893 / NCIMB 12804 / NRRL 8165 / MA-4680).